The primary structure comprises 543 residues: Serine/threonine-protein kinase PkaA (543 aa).

One can recognise a Protein kinase domain in the interval 8-276 (YLLEEPLGRG…ENLARGLRVV (269 aa)). ATP is bound by residues 14–22 (LGRGATGTV) and Lys48. Asp142 (proton acceptor) is an active-site residue. A disordered region spans residues 303–480 (PAPAQVPGAP…RQRSANPMRI (178 aa)). Residues 352–361 (VMPPVPPGQP) are compositionally biased toward pro residues. Low complexity-rich tracts occupy residues 407–420 (RQVS…RQAP) and 428–451 (PGYG…QPQR). The span at 452–461 (YAPPPAPEPQ) shows a compositional bias: pro residues.

It belongs to the protein kinase superfamily. Ser/Thr protein kinase family. In terms of processing, autophosphorylated mainly at Thr and slightly at Ser.

The enzyme catalyses L-seryl-[protein] + ATP = O-phospho-L-seryl-[protein] + ADP + H(+). It catalyses the reaction L-threonyl-[protein] + ATP = O-phospho-L-threonyl-[protein] + ADP + H(+). The sequence is that of Serine/threonine-protein kinase PkaA (pkaA) from Streptomyces coelicolor (strain ATCC BAA-471 / A3(2) / M145).